The primary structure comprises 130 residues: Small ribosomal subunit protein uS8 (130 aa).

This sequence belongs to the universal ribosomal protein uS8 family. In terms of assembly, part of the 30S ribosomal subunit. Contacts proteins S5 and S12.

Functionally, one of the primary rRNA binding proteins, it binds directly to 16S rRNA central domain where it helps coordinate assembly of the platform of the 30S subunit. In Marinobacter nauticus (strain ATCC 700491 / DSM 11845 / VT8) (Marinobacter aquaeolei), this protein is Small ribosomal subunit protein uS8.